Consider the following 157-residue polypeptide: Cell cycle control protein 50C (157 aa).

Topologically, residues 1–34 are cytoplasmic; the sequence is MEERAQHCLSRLLDNSALKQQELPIHRLYFTARR. A helical membrane pass occupies residues 35-55; sequence VLFVFFATGIFCLCMGIILIL. Residues 56-157 are Extracellular-facing; it reads SARSTQEIEI…LFLNQVDFSV (102 aa). N-linked (GlcNAc...) asparagine glycosylation occurs at Asn66.

It belongs to the CDC50/LEM3 family.

It is found in the membrane. The polypeptide is Cell cycle control protein 50C (TMEM30C) (Pan troglodytes (Chimpanzee)).